A 124-amino-acid chain; its full sequence is Small ribosomal subunit protein uS12 (124 aa).

Aspartate 89 is subject to 3-methylthioaspartic acid.

It belongs to the universal ribosomal protein uS12 family. As to quaternary structure, part of the 30S ribosomal subunit. Contacts proteins S8 and S17. May interact with IF1 in the 30S initiation complex.

Its function is as follows. With S4 and S5 plays an important role in translational accuracy. In terms of biological role, interacts with and stabilizes bases of the 16S rRNA that are involved in tRNA selection in the A site and with the mRNA backbone. Located at the interface of the 30S and 50S subunits, it traverses the body of the 30S subunit contacting proteins on the other side and probably holding the rRNA structure together. The combined cluster of proteins S8, S12 and S17 appears to hold together the shoulder and platform of the 30S subunit. The protein is Small ribosomal subunit protein uS12 of Vibrio cholerae serotype O1 (strain ATCC 39315 / El Tor Inaba N16961).